A 96-amino-acid chain; its full sequence is Integration host factor subunit beta (96 aa).

The segment at 59–86 (RVGRNPKTGETVELDGKHVPHFKPGKEL) is disordered. Over residues 72 to 86 (LDGKHVPHFKPGKEL) the composition is skewed to basic and acidic residues.

This sequence belongs to the bacterial histone-like protein family. In terms of assembly, heterodimer of an alpha and a beta chain.

In terms of biological role, this protein is one of the two subunits of integration host factor, a specific DNA-binding protein that functions in genetic recombination as well as in transcriptional and translational control. The chain is Integration host factor subunit beta from Pseudoalteromonas atlantica (strain T6c / ATCC BAA-1087).